We begin with the raw amino-acid sequence, 151 residues long: Large ribosomal subunit protein bL9 (151 aa).

It belongs to the bacterial ribosomal protein bL9 family.

Binds to the 23S rRNA. This Nitrosomonas europaea (strain ATCC 19718 / CIP 103999 / KCTC 2705 / NBRC 14298) protein is Large ribosomal subunit protein bL9.